The following is a 321-amino-acid chain: Lipoyl synthase (321 aa).

Positions 68, 73, 79, 94, 98, 101, and 308 each coordinate [4Fe-4S] cluster. The 218-residue stretch at Phe80–Thr297 folds into the Radical SAM core domain.

It belongs to the radical SAM superfamily. Lipoyl synthase family. It depends on [4Fe-4S] cluster as a cofactor.

It localises to the cytoplasm. The enzyme catalyses [[Fe-S] cluster scaffold protein carrying a second [4Fe-4S](2+) cluster] + N(6)-octanoyl-L-lysyl-[protein] + 2 oxidized [2Fe-2S]-[ferredoxin] + 2 S-adenosyl-L-methionine + 4 H(+) = [[Fe-S] cluster scaffold protein] + N(6)-[(R)-dihydrolipoyl]-L-lysyl-[protein] + 4 Fe(3+) + 2 hydrogen sulfide + 2 5'-deoxyadenosine + 2 L-methionine + 2 reduced [2Fe-2S]-[ferredoxin]. The protein operates within protein modification; protein lipoylation via endogenous pathway; protein N(6)-(lipoyl)lysine from octanoyl-[acyl-carrier-protein]: step 2/2. In terms of biological role, catalyzes the radical-mediated insertion of two sulfur atoms into the C-6 and C-8 positions of the octanoyl moiety bound to the lipoyl domains of lipoate-dependent enzymes, thereby converting the octanoylated domains into lipoylated derivatives. This chain is Lipoyl synthase, found in Shewanella denitrificans (strain OS217 / ATCC BAA-1090 / DSM 15013).